Consider the following 466-residue polypeptide: Zinc finger protein NUTCRACKER (466 aa).

Over residues 1 to 23 (MTSEVLQTISSGSGFAQPQSSST) the composition is skewed to polar residues. The segment at 1–29 (MTSEVLQTISSGSGFAQPQSSSTLDHDES) is disordered. Ser56 bears the Phosphoserine mark. The segment at 66–88 (FLCEVCGKGFQRDQNLQLHRRGH) adopts a C2H2-type 1 zinc-finger fold. The residue at position 98 (Thr98) is a Phosphothreonine; by KIN10. The segment at 107-137 (YVCPEKTCVHHHSSRALGDLTGIKKHFCRKH) adopts a C2H2-type 2 zinc-finger fold. Residues 134-141 (CRKHGEKK) carry the Nuclear localization signal motif. The segment at 142 to 165 (WTCEKCAKRYAVQSDWKAHSKTCG) adopts a C2H2-type 2; degenerate zinc-finger fold. Zn(2+) contacts are provided by Cys144, Cys147, His160, Cys164, Cys171, and Cys173. The CCHC-type 2; atypical zinc-finger motif lies at 169–192 (YRCDCGTIFSRRDSFITHRAFCDA). Phosphoserine; by KIN10 is present on residues Ser178 and Ser182. The tract at residues 179 to 191 (RRDSFITHRAFCD) is SHR-binding. Zn(2+) is bound by residues His186 and Cys190.

In terms of assembly, interacts with AKIN10. Post-translationally, inhibition of transcription factor activity by KIN10-mediated phosphorylation at Thr-98, Ser-178 and Ser-182 under sugar deprivation conditions, thus delaying flowering. As to expression, highly expressed in vegetative organs and at lower levels in flowers and siliques. Expressed predominantly in roots. In roots, present in cortex, endodermis, and pericycle layer.

It is found in the nucleus. Its function is as follows. Transcription activator that binds to the DNA sequence 5'-CTTTTGTCC-3'. Regulates photoperiodic flowering by modulating sugar transport and metabolism. Regulates SUS1 and SUS4. Transcription factor that regulates tissue boundaries and asymmetric cell division. Contributes to the sequestration of 'SHORT-ROOT' to the nucleus. The sequence is that of Zinc finger protein NUTCRACKER from Arabidopsis thaliana (Mouse-ear cress).